Consider the following 413-residue polypeptide: Arginine biosynthesis bifunctional protein ArgJ (413 aa).

Thr-160, Lys-186, Thr-197, Glu-277, Asn-408, and Thr-413 together coordinate substrate. The active-site Nucleophile is Thr-197.

It belongs to the ArgJ family. As to quaternary structure, heterotetramer of two alpha and two beta chains.

It localises to the cytoplasm. The catalysed reaction is N(2)-acetyl-L-ornithine + L-glutamate = N-acetyl-L-glutamate + L-ornithine. The enzyme catalyses L-glutamate + acetyl-CoA = N-acetyl-L-glutamate + CoA + H(+). Its pathway is amino-acid biosynthesis; L-arginine biosynthesis; L-ornithine and N-acetyl-L-glutamate from L-glutamate and N(2)-acetyl-L-ornithine (cyclic): step 1/1. It participates in amino-acid biosynthesis; L-arginine biosynthesis; N(2)-acetyl-L-ornithine from L-glutamate: step 1/4. Its function is as follows. Catalyzes two activities which are involved in the cyclic version of arginine biosynthesis: the synthesis of N-acetylglutamate from glutamate and acetyl-CoA as the acetyl donor, and of ornithine by transacetylation between N(2)-acetylornithine and glutamate. In Prochlorococcus marinus (strain SARG / CCMP1375 / SS120), this protein is Arginine biosynthesis bifunctional protein ArgJ.